The following is a 1229-amino-acid chain: Phosphorylase b kinase regulatory subunit alpha, liver isoform (1229 aa).

Acidic residues predominate over residues 625 to 646; the sequence is DSLLEDDEEQEEEEEDKFEDDY. Residues 625–648 are disordered; that stretch reads DSLLEDDEEQEEEEEDKFEDDYNN. Residues 825–855 are calmodulin-binding; that stretch reads LEELYIQAGACKEWGLIRYISGILRKRVEVL. Residues 1024–1050 form a disordered region; sequence EIKQRCSSPSTPSGILSPVGPGPADGQ. Residues 1028–1037 are compositionally biased toward polar residues; sequence RCSSPSTPSG. Residues 1052-1092 form a calmodulin-binding region; it reads HWVERQGQWLRRRRLDGAINRVPVGFYQKVWKILQKCHGLS. C1226 carries the S-farnesyl cysteine lipid modification.

It belongs to the phosphorylase b kinase regulatory chain family. Polymer of 16 chains, four each of alpha, beta, gamma, and delta. Alpha and beta are regulatory chains, gamma is the catalytic chain, and delta is calmodulin. Although the final Cys may be farnesylated, the terminal tripeptide is probably not removed, and the C-terminus is not methylated.

It localises to the cell membrane. The protein operates within glycan biosynthesis; glycogen metabolism. With respect to regulation, by phosphorylation of various serine residues and by calcium. Functionally, phosphorylase b kinase catalyzes the phosphorylation of serine in certain substrates, including troponin I. The alpha chain may bind calmodulin. The sequence is that of Phosphorylase b kinase regulatory subunit alpha, liver isoform (phka2) from Takifugu rubripes (Japanese pufferfish).